A 445-amino-acid polypeptide reads, in one-letter code: Phenylacetate-coenzyme A ligase (445 aa).

This sequence belongs to the phenylacetyl-CoA ligase family. Monomer.

The enzyme catalyses 2-phenylacetate + ATP + CoA = phenylacetyl-CoA + AMP + diphosphate. It participates in aromatic compound metabolism; phenylacetate degradation. Functionally, catalyzes the activation of phenylacetic acid (PA) to phenylacetyl-CoA (PA-CoA). Involved in the phenylalanine metabolism. The protein is Phenylacetate-coenzyme A ligase of Thermus thermophilus (strain ATCC BAA-163 / DSM 7039 / HB27).